The chain runs to 197 residues: Xanthine phosphoribosyltransferase (197 aa).

The xanthine site is built by leucine 20 and asparagine 27. 128-132 (ANGQA) lines the 5-phospho-alpha-D-ribose 1-diphosphate pocket. Position 156 (lysine 156) interacts with xanthine.

This sequence belongs to the purine/pyrimidine phosphoribosyltransferase family. Xpt subfamily. As to quaternary structure, homodimer.

The protein localises to the cytoplasm. It catalyses the reaction XMP + diphosphate = xanthine + 5-phospho-alpha-D-ribose 1-diphosphate. Its pathway is purine metabolism; XMP biosynthesis via salvage pathway; XMP from xanthine: step 1/1. In terms of biological role, converts the preformed base xanthine, a product of nucleic acid breakdown, to xanthosine 5'-monophosphate (XMP), so it can be reused for RNA or DNA synthesis. The polypeptide is Xanthine phosphoribosyltransferase (Bacillus thuringiensis (strain Al Hakam)).